Consider the following 368-residue polypeptide: Probable dual-specificity RNA methyltransferase RlmN (368 aa).

The active-site Proton acceptor is the Glu-100. In terms of domain architecture, Radical SAM core spans 106–344 (QYYGLSVCVT…CVVRQEHGTD (239 aa)). A disulfide bridge links Cys-113 with Cys-349. Residues Cys-120, Cys-124, and Cys-127 each contribute to the [4Fe-4S] cluster site. S-adenosyl-L-methionine contacts are provided by residues 172-173 (GE), Ser-204, 227-229 (SLH), and Asn-305. The S-methylcysteine intermediate role is filled by Cys-349.

This sequence belongs to the radical SAM superfamily. RlmN family. Requires [4Fe-4S] cluster as cofactor.

It localises to the cytoplasm. The enzyme catalyses adenosine(2503) in 23S rRNA + 2 reduced [2Fe-2S]-[ferredoxin] + 2 S-adenosyl-L-methionine = 2-methyladenosine(2503) in 23S rRNA + 5'-deoxyadenosine + L-methionine + 2 oxidized [2Fe-2S]-[ferredoxin] + S-adenosyl-L-homocysteine. The catalysed reaction is adenosine(37) in tRNA + 2 reduced [2Fe-2S]-[ferredoxin] + 2 S-adenosyl-L-methionine = 2-methyladenosine(37) in tRNA + 5'-deoxyadenosine + L-methionine + 2 oxidized [2Fe-2S]-[ferredoxin] + S-adenosyl-L-homocysteine. Functionally, specifically methylates position 2 of adenine 2503 in 23S rRNA and position 2 of adenine 37 in tRNAs. In Streptococcus agalactiae serotype III (strain NEM316), this protein is Probable dual-specificity RNA methyltransferase RlmN.